The sequence spans 167 residues: Peptidyl-prolyl cis-trans isomerase-like 3 (167 aa).

Residues 1–160 (MSVTLHTTLG…EEVRIERVTV (160 aa)) form the PPIase cyclophilin-type domain.

It belongs to the cyclophilin-type PPIase family. PPIL3 subfamily.

The catalysed reaction is [protein]-peptidylproline (omega=180) = [protein]-peptidylproline (omega=0). PPIases accelerate the folding of proteins. It catalyzes the cis-trans isomerization of proline imidic peptide bonds in oligopeptides. In Neurospora crassa (strain ATCC 24698 / 74-OR23-1A / CBS 708.71 / DSM 1257 / FGSC 987), this protein is Peptidyl-prolyl cis-trans isomerase-like 3 (cyp-10).